The sequence spans 540 residues: MPPAVPAAAATARQSASGRERNFKDKDKPESVRNSNIVAAKAVADAVRTSLGPRGMDKMIQSGNGDVTITNDGATILNQMSVIHPTAKMLVELSKAQDIEAGDGTTTVVVMAGALLDAAQNLLSKGIHPTTISESFQSAAAEAEKILDEMSSPVDLSNDALLNKMATTSLNSKVVSQHSWLLAPMAVNAVKKIINSENDSNVNLKMIKIIKKMGDTVEESELIEGALIDQKTMGRGAPTRIEKAKIGLIQFQISPPKTDMENQVIITDYAQMDRALKEERQYLLEICKQIKAAGCNVLLIQKSILRDAVNELALHFLAKMKIMCIKDIEREDIEFYSRILGCRPVASVDHFNADALGYADLVEEIPTGGDGKVIKVTGVQNPGHAVSILLRGSNKLVLEEADRSIHDALCVIRCLVKKKALLPGGGAPEMEIAVKLRNLAQTQHGATQYCWRAFADALELIPYTLAENAGLSPIHTVTELRNNHANGNSSYGVNVRKGYVTDMVEEDVVQPLLVTASAIKQASECVRSILKIDDIVMAVR.

Over residues 1–12 (MPPAVPAAAATA) the composition is skewed to low complexity. The tract at residues 1–32 (MPPAVPAAAATARQSASGRERNFKDKDKPESV) is disordered. The span at 18–31 (GRERNFKDKDKPES) shows a compositional bias: basic and acidic residues.

This sequence belongs to the TCP-1 chaperonin family. Heterooligomeric complex of about 850 to 900 kDa that forms two stacked rings, 12 to 16 nm in diameter.

Its subcellular location is the cytoplasm. Its function is as follows. Molecular chaperone; assists the folding of proteins upon ATP hydrolysis. Known to play a role, in vitro, in the folding of actin and tubulin. This Caenorhabditis elegans protein is T-complex protein 1 subunit delta (cct-4).